A 196-amino-acid chain; its full sequence is Dimiconin (196 aa).

Residues 1–21 form the signal peptide; sequence MKTIIVVTIFGILTCAYPTDG. N-linked (GlcNAc...) asparagine glycosylation is found at Asn62 and Asn187.

It belongs to the calycin superfamily. Triabin family. Salivary gland.

The protein localises to the secreted. Its function is as follows. Inhibits the intrinsic blood coagulation pathway by blocking the activation of host coagulation factor XII (F12) but not the enzymatic activity of activated F12. This chain is Dimiconin, found in Triatoma dimidiata (Kissing bug).